A 67-amino-acid polypeptide reads, in one-letter code: Large ribosomal subunit protein uL29 (67 aa).

This sequence belongs to the universal ribosomal protein uL29 family.

This chain is Large ribosomal subunit protein uL29, found in Sulfurihydrogenibium sp. (strain YO3AOP1).